Here is a 309-residue protein sequence, read N- to C-terminus: Wall-associated proteinase (309 aa).

Residues N190 and N295 are each glycosylated (N-linked (GlcNAc...) asparagine).

It is found in the secreted. Its subcellular location is the cell wall. It localises to the membrane. Its function is as follows. May participate in wall plasticization and/or intussusception or in cell wall turnover. The chain is Wall-associated proteinase from Coccidioides immitis (strain RS) (Valley fever fungus).